A 1004-amino-acid chain; its full sequence is Polyhomeotic-like protein 1 (1004 aa).

A compositionally biased stretch (low complexity) spans 1 to 22 (METESEQNSNSTNGSSSSGGSS). 6 disordered regions span residues 1 to 24 (METE…SSRP), 212 to 241 (NQQA…SSLS), 261 to 355 (SLNL…NLTR), 432 to 512 (QQQQ…QLGA), 556 to 589 (RGMP…PPTL), and 636 to 672 (TLAV…SPKV). Positions 212 to 228 (NQQASAQGPQMQGSTQK) are enriched in polar residues. The span at 279 to 303 (MGPGGGGQAHGGLGQLPSSGMGGGS) shows a compositional bias: gly residues. Polar residues-rich tracts occupy residues 319-329 (QTVTVSQGSQT) and 344-355 (SGQQNVGMNLTR). Residues 432–447 (QQQQQQQQPQATTLTA) show a composition bias toward low complexity. A compositionally biased stretch (pro residues) spans 448 to 458 (PQPPQVPPTQQ). Over residues 459 to 482 (VPPSQSQQQAQTLVVQPMLQSSPL) the composition is skewed to low complexity. A compositionally biased stretch (pro residues) spans 483–495 (SLPPDAAPKPPIP). The segment covering 566-583 (QAHLASSPPSSQAPGALQ) has biased composition (low complexity). Position 645 is a phosphoserine (Ser645). A Glycyl lysine isopeptide (Lys-Gly) (interchain with G-Cter in SUMO2) cross-link involves residue Lys763. The FCS-type zinc finger occupies 791–825 (LDKKANLLKCEYCGKYAPAEQFRGSKRFCSMTCAK). The Zn(2+) site is built by Cys800, Cys803, Cys819, and Cys823. The interval 848–928 (ANYARVRRRG…APPTPELHGI (81 aa)) is disordered. Phosphoserine is present on Ser898. Thr922 is subject to Phosphothreonine. Residues 940 to 1004 (WSVEEVYEFI…CAKINVLKET (65 aa)) form the SAM domain.

In terms of assembly, homodimer. Component of a PRC1-like complex. Interacts with RNF2 and CBX7. Interacts with PHC2, PHC2 and BMI1.

The protein resides in the nucleus. Its function is as follows. Component of a Polycomb group (PcG) multiprotein PRC1-like complex, a complex class required to maintain the transcriptionally repressive state of many genes, including Hox genes, throughout development. PcG PRC1 complex acts via chromatin remodeling and modification of histones; it mediates monoubiquitination of histone H2A 'Lys-119', rendering chromatin heritably changed in its expressibility. Required for proper control of cellular levels of GMNN expression. This Homo sapiens (Human) protein is Polyhomeotic-like protein 1 (PHC1).